The chain runs to 275 residues: Intercellular adhesion molecule 2 (275 aa).

Positions 1 to 24 (MSSFSYRTLTVALFALICCPGSDE) are cleaved as a signal peptide. The Extracellular segment spans residues 25 to 223 (KVFEVHVRPK…EIYEPVSDSQ (199 aa)). The region spanning 41-98 (KGSLKVNCSTTCNQPEVGGLETSLDKILLDEQAQWKHYLVSNISHDTVLQCHFTCSGK) is the Ig-like C2-type 1 domain. N-linked (GlcNAc...) asparagine glycosylation is found at N47, N82, N105, N153, N176, and N187. 2 cysteine pairs are disulfide-bonded: C48-C91 and C52-C95. One can recognise an Ig-like C2-type 2 domain in the interval 127-197 (GKSFTIECRV…FSCLAVLDLM (71 aa)). C134 and C190 are oxidised to a cystine. The helical transmembrane segment at 224 to 248 (MVIIVTVVSVLLSLFVTSVLLCFIF) threads the bilayer. Residues 249 to 275 (GQHLRQQRMGTYGVRAAWRRLPQAFRP) lie on the Cytoplasmic side of the membrane. The interval 251–275 (HLRQQRMGTYGVRAAWRRLPQAFRP) is required for interaction with EZR, MSN and RDX and co-localization to microvilli.

Belongs to the immunoglobulin superfamily. ICAM family. In terms of assembly, interacts with RDX, EZR and MSN.

Its subcellular location is the membrane. It is found in the cell projection. It localises to the microvillus. In terms of biological role, ICAM proteins are ligands for the leukocyte adhesion protein LFA-1 (integrin alpha-L/beta-2). ICAM2 may play a role in lymphocyte recirculation by blocking LFA-1-dependent cell adhesion. It mediates adhesive interactions important for antigen-specific immune response, NK-cell mediated clearance, lymphocyte recirculation, and other cellular interactions important for immune response and surveillance. The chain is Intercellular adhesion molecule 2 (ICAM2) from Pan troglodytes (Chimpanzee).